Here is a 251-residue protein sequence, read N- to C-terminus: Triosephosphate isomerase (251 aa).

12-14 (NWK) lines the substrate pocket. Residue His-99 is the Electrophile of the active site. Glu-169 acts as the Proton acceptor in catalysis. Residues Gly-175, Ser-214, and 235-236 (GG) each bind substrate.

This sequence belongs to the triosephosphate isomerase family. In terms of assembly, homodimer.

The protein resides in the cytoplasm. The catalysed reaction is D-glyceraldehyde 3-phosphate = dihydroxyacetone phosphate. It functions in the pathway carbohydrate biosynthesis; gluconeogenesis. It participates in carbohydrate degradation; glycolysis; D-glyceraldehyde 3-phosphate from glycerone phosphate: step 1/1. In terms of biological role, involved in the gluconeogenesis. Catalyzes stereospecifically the conversion of dihydroxyacetone phosphate (DHAP) to D-glyceraldehyde-3-phosphate (G3P). This chain is Triosephosphate isomerase, found in Bradyrhizobium sp. (strain BTAi1 / ATCC BAA-1182).